Here is a 341-residue protein sequence, read N- to C-terminus: GTP 3',8-cyclase (341 aa).

One can recognise a Radical SAM core domain in the interval 17–235; that stretch reads TYGRVATDLR…LRTRFELTAE (219 aa). Position 26 (Arg26) interacts with GTP. [4Fe-4S] cluster is bound by residues Cys33 and Cys37. Position 39 (Tyr39) interacts with S-adenosyl-L-methionine. A [4Fe-4S] cluster-binding site is contributed by Cys40. Arg77 provides a ligand contact to GTP. Gly81 provides a ligand contact to S-adenosyl-L-methionine. Thr108 contributes to the GTP binding site. Ser132 provides a ligand contact to S-adenosyl-L-methionine. Residue Lys169 coordinates GTP. Met203 serves as a coordination point for S-adenosyl-L-methionine. Residues Cys268 and Cys271 each contribute to the [4Fe-4S] cluster site. GTP is bound at residue 273-275; the sequence is RTR. Cys285 contacts [4Fe-4S] cluster.

It belongs to the radical SAM superfamily. MoaA family. As to quaternary structure, monomer and homodimer. The cofactor is [4Fe-4S] cluster.

The catalysed reaction is GTP + AH2 + S-adenosyl-L-methionine = (8S)-3',8-cyclo-7,8-dihydroguanosine 5'-triphosphate + 5'-deoxyadenosine + L-methionine + A + H(+). It participates in cofactor biosynthesis; molybdopterin biosynthesis. Its function is as follows. Catalyzes the cyclization of GTP to (8S)-3',8-cyclo-7,8-dihydroguanosine 5'-triphosphate. In Streptomyces coelicolor (strain ATCC BAA-471 / A3(2) / M145), this protein is GTP 3',8-cyclase.